The chain runs to 454 residues: Tryptophanase (454 aa).

Lysine 256 bears the N6-(pyridoxal phosphate)lysine mark.

This sequence belongs to the beta-eliminating lyase family. Homotetramer. The cofactor is pyridoxal 5'-phosphate.

It catalyses the reaction L-tryptophan + H2O = indole + pyruvate + NH4(+). The protein operates within amino-acid degradation; L-tryptophan degradation via pyruvate pathway; indole and pyruvate from L-tryptophan: step 1/1. The sequence is that of Tryptophanase from Hyphomonas neptunium (strain ATCC 15444).